Here is a 144-residue protein sequence, read N- to C-terminus: Large ribosomal subunit protein uL11 (144 aa).

The protein belongs to the universal ribosomal protein uL11 family. In terms of assembly, part of the ribosomal stalk of the 50S ribosomal subunit. Interacts with L10 and the large rRNA to form the base of the stalk. L10 forms an elongated spine to which L12 dimers bind in a sequential fashion forming a multimeric L10(L12)X complex. In terms of processing, one or more lysine residues are methylated.

Functionally, forms part of the ribosomal stalk which helps the ribosome interact with GTP-bound translation factors. This Legionella pneumophila (strain Paris) protein is Large ribosomal subunit protein uL11.